Consider the following 337-residue polypeptide: Inositol 2-dehydrogenase (337 aa).

Belongs to the Gfo/Idh/MocA family. In terms of assembly, homotetramer.

It carries out the reaction myo-inositol + NAD(+) = scyllo-inosose + NADH + H(+). In terms of biological role, involved in the oxidation of myo-inositol (MI) to 2-keto-myo-inositol (2KMI or 2-inosose). The polypeptide is Inositol 2-dehydrogenase (Burkholderia lata (strain ATCC 17760 / DSM 23089 / LMG 22485 / NCIMB 9086 / R18194 / 383)).